A 425-amino-acid chain; its full sequence is Bifunctional phosphoribosylaminoimidazole carboxylase/phosphoribosylaminoimidazole succinocarboxamide synthetase (425 aa).

Alanine 2 bears the N-acetylalanine mark. Positions 2–260 (ATAEVLNIGK…WVAERVELLL (259 aa)) are SAICAR synthetase domain. Tyrosine 22 is subject to Phosphotyrosine. Phosphoserine is present on serine 27. Position 36 is an N6-acetyllysine (lysine 36). Serine 107 carries the post-translational modification Phosphoserine. A Phosphothreonine modification is found at threonine 238. Lysine 247 is modified (N6-acetyllysine). Residues 261 to 266 (KSESQC) are linker. The interval 267 to 425 (RVVVLMGSTS…ADKKIRECNL (159 aa)) is AIR carboxylase domain. Serine 274 is modified (phosphoserine). Residue serine 332 participates in CO2 binding.

This sequence in the N-terminal section; belongs to the SAICAR synthetase family. The protein in the C-terminal section; belongs to the AIR carboxylase family. Class II subfamily. In terms of assembly, homooctamer.

It carries out the reaction 5-amino-1-(5-phospho-D-ribosyl)imidazole-4-carboxylate + L-aspartate + ATP = (2S)-2-[5-amino-1-(5-phospho-beta-D-ribosyl)imidazole-4-carboxamido]succinate + ADP + phosphate + 2 H(+). The catalysed reaction is 5-amino-1-(5-phospho-D-ribosyl)imidazole-4-carboxylate + H(+) = 5-amino-1-(5-phospho-beta-D-ribosyl)imidazole + CO2. It functions in the pathway purine metabolism; IMP biosynthesis via de novo pathway; 5-amino-1-(5-phospho-D-ribosyl)imidazole-4-carboxamide from 5-amino-1-(5-phospho-D-ribosyl)imidazole-4-carboxylate: step 1/2. Its pathway is purine metabolism; IMP biosynthesis via de novo pathway; 5-amino-1-(5-phospho-D-ribosyl)imidazole-4-carboxylate from 5-amino-1-(5-phospho-D-ribosyl)imidazole (carboxylase route): step 1/1. Functionally, bifunctional phosphoribosylaminoimidazole carboxylase and phosphoribosylaminoimidazole succinocarboxamide synthetase catalyzing two reactions of the de novo purine biosynthetic pathway. The protein is Bifunctional phosphoribosylaminoimidazole carboxylase/phosphoribosylaminoimidazole succinocarboxamide synthetase of Homo sapiens (Human).